Reading from the N-terminus, the 183-residue chain is Large ribosomal subunit protein eL18 (183 aa).

The interval 150-183 (RHFGPAPGAPRSHTKPYVRTKGHERARPRRRSNV) is disordered. Over residues 161–183 (SHTKPYVRTKGHERARPRRRSNV) the composition is skewed to basic residues.

This sequence belongs to the eukaryotic ribosomal protein eL18 family.

The protein resides in the cytoplasm. This is Large ribosomal subunit protein eL18 (RpL18) from Spodoptera frugiperda (Fall armyworm).